Reading from the N-terminus, the 830-residue chain is Frameshifted structural polyprotein (830 aa).

The tract at residues 58–109 (AIAPARPPKPKKKKTTKPKPKTQPKKINGKTQQQKKKDKQADKKKKKPGKRE) is disordered. Residues 65 to 107 (PKPKKKKTTKPKPKTQPKKINGKTQQQKKKDKQADKKKKKPGK) show a composition bias toward basic residues. Residues 94-106 (KDKQADKKKKKPG) are ribosome-binding. C119 and C134 form a disulfide bridge. Positions 119–267 (CIFEVKHEGK…RVTPEGSEEW (149 aa)) constitute a Peptidase S3 domain. Residues H145, D167, and S219 each act as charge relay system in the active site. N280, N327, N533, and N595 each carry an N-linked (GlcNAc...) asparagine; by host glycan. Residues 702–722 (AVVGMSLLALISIFASCYMLV) traverse the membrane as a helical segment. S-palmitoyl cysteine; by host attachment occurs at residues C718, C728, C748, and C749. The segment at 728–748 (CLTPYALTPGAAVPWTLGILC) is transient transmembrane before p62-6K protein processing. A run of 2 helical transmembrane segments spans residues 771–791 (ALFW…TYCL) and 793–813 (NVLC…RGHR).

Homodimer. Homomultimer. Interacts with host karyopherin KPNA4; this interaction allows the nuclear import of the viral capsid protein. Precursor of protein E3/E2: The precursor of protein E3/E2 and E1 form a heterodimer shortly after synthesis. Interacts with host IRAK1; the interaction leads to inhibition of IRAK1-dependent signaling. In terms of assembly, processing of the precursor of protein E3/E2 into E2 and E3 results in a heterodimer of the spike glycoproteins E2 and E1. Spike at virion surface are constituted of three E2-E1 heterodimers. Interacts with 6K protein. Interacts with host MXRA8; this interaction mediates virus entry. Specific enzymatic cleavages in vivo yield mature proteins. Capsid protein is auto-cleaved during polyprotein translation, unmasking a signal peptide at the N-terminus of the precursor of E3/E2. The remaining polyprotein is then targeted to the host endoplasmic reticulum, where host signal peptidase cleaves it into pE2 and TF. pE2 is further processed to mature E3 and E2 by host furin in trans-Golgi vesicle.

It is found in the virion. It localises to the host cytoplasm. The protein localises to the host cell membrane. The protein resides in the host nucleus. Its subcellular location is the virion membrane. It catalyses the reaction Autocatalytic release of the core protein from the N-terminus of the togavirus structural polyprotein by hydrolysis of a -Trp-|-Ser- bond.. In terms of biological role, forms an icosahedral capsid with a T=4 symmetry composed of 240 copies of the capsid protein surrounded by a lipid membrane through which penetrate 80 spikes composed of trimers of E1-E2 heterodimers. The capsid protein binds to the viral RNA genome at a site adjacent to a ribosome binding site for viral genome translation following genome release. Possesses a protease activity that results in its autocatalytic cleavage from the nascent structural protein. Following its self-cleavage, the capsid protein transiently associates with ribosomes, and within several minutes the protein binds to viral RNA and rapidly assembles into icosahedric core particles. The resulting nucleocapsid eventually associates with the cytoplasmic domain of the spike glycoprotein E2 at the cell membrane, leading to budding and formation of mature virions. In case of infection, new virions attach to target cells and after clathrin-mediated endocytosis their membrane fuses with the host endosomal membrane. This leads to the release of the nucleocapsid into the cytoplasm, followed by an uncoating event necessary for the genomic RNA to become accessible. The uncoating might be triggered by the interaction of capsid proteins with ribosomes. Binding of ribosomes would release the genomic RNA since the same region is genomic RNA-binding and ribosome-binding. Specifically inhibits interleukin-1 receptor-associated kinase 1/IRAK1-dependent signaling during viral entry, representing a means by which the alphaviruses may evade innate immune detection and activation prior to viral gene expression. Functionally, provides the signal sequence for p62 (E3/E2) translocation to the host endoplasmic reticulum. Mediates pH protection of E1 during secretory pathway trans- port. Its function is as follows. Plays a role in viral attachment to target host cell, by binding to the cell receptor. Synthesized as a p62 precursor which is processed by furin at the cell membrane just before virion budding, giving rise to E2-E1 heterodimer. The p62-E1 heterodimer is stable, whereas E2-E1 is unstable and dissociate at low pH. p62 is processed at the last step, presumably to avoid E1 fusion activation before its final export to cell surface. E2 C-terminus contains a transitory transmembrane that would be disrupted by palmitoylation, resulting in reorientation of the C-terminal tail from lumenal to cytoplasmic side. This step is critical since E2 C-terminus is involved in budding by interacting with capsid proteins. This release of E2 C-terminus in cytoplasm occurs lately in protein export, and precludes premature assembly of particles at the endoplasmic reticulum membrane. Virion component that may play a role during viral assembly. This is Frameshifted structural polyprotein from Aedes (Middle-African hedgehog).